The chain runs to 308 residues: MEWLEITVRTPPEGVELVADIFQEIGTGGVVIEDPAVIFKYAGATCPEEWAVPESATADGLPRVKGYLPADGTQSKRLEELAAVLARLLPGPASAVSTRTVSEEDWANAWKKYYKPVRAGRRLVVKPSWEDYRAEEGDLVIEMDPGMAFGSGTHATTCLCLRLLEKYVRPGGTVYDVGTGSGVLAVAAARLGAGRVVAVDIDPLACRVAAGNAERNGVAGKVQVVQGNLLEKVEGRADLVVANIIADVIAAFAPEAAGALAPGGVLIASGIIEEKAGLVVCALEAAGLAVCERDEEGRWVALAARLKA.

Residues threonine 157, glycine 178, aspartate 200, and asparagine 243 each contribute to the S-adenosyl-L-methionine site.

Belongs to the methyltransferase superfamily. PrmA family.

Its subcellular location is the cytoplasm. It catalyses the reaction L-lysyl-[protein] + 3 S-adenosyl-L-methionine = N(6),N(6),N(6)-trimethyl-L-lysyl-[protein] + 3 S-adenosyl-L-homocysteine + 3 H(+). In terms of biological role, methylates ribosomal protein L11. The protein is Ribosomal protein L11 methyltransferase of Pelotomaculum thermopropionicum (strain DSM 13744 / JCM 10971 / SI).